The sequence spans 436 residues: Diaminobutyrate--2-oxoglutarate transaminase (436 aa).

Lys-269 bears the N6-(pyridoxal phosphate)lysine mark.

This sequence belongs to the class-III pyridoxal-phosphate-dependent aminotransferase family. Pyridoxal 5'-phosphate serves as cofactor.

The enzyme catalyses L-2,4-diaminobutanoate + 2-oxoglutarate = L-aspartate 4-semialdehyde + L-glutamate. The protein operates within amine and polyamine biosynthesis; ectoine biosynthesis; L-ectoine from L-aspartate 4-semialdehyde: step 1/3. Functionally, catalyzes reversively the conversion of L-aspartate beta-semialdehyde (ASA) to L-2,4-diaminobutyrate (DABA) by transamination with L-glutamate. This is Diaminobutyrate--2-oxoglutarate transaminase (ectB) from Nocardia farcinica (strain IFM 10152).